Reading from the N-terminus, the 226-residue chain is Histone H2B.v1 (226 aa).

A disordered region spans residues 100 to 130 (FNSAKQYPPQPPPAKTATPSSPSSIPAPPIS). The span at 114–123 (KTATPSSPSS) shows a compositional bias: low complexity.

This sequence belongs to the histone H2B family.

The sequence is that of Histone H2B.v1 (H2Bv1) from Dictyostelium discoideum (Social amoeba).